The sequence spans 384 residues: PqqA peptide cyclase (384 aa).

Residues 5–220 enclose the Radical SAM core domain; it reads VGLPLWLLAE…TNEYREKLKA (216 aa). [4Fe-4S] cluster is bound by residues C19, C23, and C26.

The protein belongs to the radical SAM superfamily. PqqE family. In terms of assembly, interacts with PqqD. The interaction is necessary for activity of PqqE. [4Fe-4S] cluster serves as cofactor.

It carries out the reaction [PQQ precursor protein] + S-adenosyl-L-methionine = E-Y cross-linked-[PQQ precursor protein] + 5'-deoxyadenosine + L-methionine + H(+). It participates in cofactor biosynthesis; pyrroloquinoline quinone biosynthesis. In terms of biological role, catalyzes the cross-linking of a glutamate residue and a tyrosine residue in the PqqA protein as part of the biosynthesis of pyrroloquinoline quinone (PQQ). In Acinetobacter baumannii (strain ACICU), this protein is PqqA peptide cyclase.